Consider the following 605-residue polypeptide: Elongation factor 4 (605 aa).

Residues 11–193 (KRIRNFSIIA…KVVSNIPSPR (183 aa)) form the tr-type G domain. Residues 23–28 (DHGKST) and 140–143 (NKID) contribute to the GTP site.

It belongs to the TRAFAC class translation factor GTPase superfamily. Classic translation factor GTPase family. LepA subfamily.

The protein localises to the cell membrane. The catalysed reaction is GTP + H2O = GDP + phosphate + H(+). Functionally, required for accurate and efficient protein synthesis under certain stress conditions. May act as a fidelity factor of the translation reaction, by catalyzing a one-codon backward translocation of tRNAs on improperly translocated ribosomes. Back-translocation proceeds from a post-translocation (POST) complex to a pre-translocation (PRE) complex, thus giving elongation factor G a second chance to translocate the tRNAs correctly. Binds to ribosomes in a GTP-dependent manner. The protein is Elongation factor 4 of Phytoplasma mali (strain AT).